Here is a 311-residue protein sequence, read N- to C-terminus: Aspartate carbamoyltransferase catalytic subunit (311 aa).

Carbamoyl phosphate contacts are provided by arginine 55 and threonine 56. Lysine 85 provides a ligand contact to L-aspartate. Residues arginine 106, histidine 135, and glutamine 138 each coordinate carbamoyl phosphate. Positions 168 and 230 each coordinate L-aspartate. Residues leucine 268 and proline 269 each coordinate carbamoyl phosphate.

This sequence belongs to the aspartate/ornithine carbamoyltransferase superfamily. ATCase family. Heterododecamer (2C3:3R2) of six catalytic PyrB chains organized as two trimers (C3), and six regulatory PyrI chains organized as three dimers (R2).

The catalysed reaction is carbamoyl phosphate + L-aspartate = N-carbamoyl-L-aspartate + phosphate + H(+). It participates in pyrimidine metabolism; UMP biosynthesis via de novo pathway; (S)-dihydroorotate from bicarbonate: step 2/3. Catalyzes the condensation of carbamoyl phosphate and aspartate to form carbamoyl aspartate and inorganic phosphate, the committed step in the de novo pyrimidine nucleotide biosynthesis pathway. This is Aspartate carbamoyltransferase catalytic subunit from Yersinia pestis.